Here is a 297-residue protein sequence, read N- to C-terminus: tRNA pseudouridine synthase B (297 aa).

The active-site Nucleophile is the D41.

Belongs to the pseudouridine synthase TruB family. Type 1 subfamily.

The enzyme catalyses uridine(55) in tRNA = pseudouridine(55) in tRNA. Functionally, responsible for synthesis of pseudouridine from uracil-55 in the psi GC loop of transfer RNAs. The polypeptide is tRNA pseudouridine synthase B (Synechococcus sp. (strain CC9311)).